Consider the following 217-residue polypeptide: MTDDKDAKLIEAGRKLFARDWQFIWASPSIQTLPPMDGVEIAFAGRSNVGKSSLINALTGRNALARTSHTPGRTQELIFFEVPGKKDLRLVDMPGYGYAKAPKSQVASWTELIHKFLLGRASLARVYVLIDARHGLKDVDLEILGTLDRSAVSYQIVLTKADQVKPSELASRIAETEAALAKHPAAFPNVLATSSRSATGMAELRAAMAKLLEERSS.

The EngB-type G domain occupies 37-214; the sequence is DGVEIAFAGR…RAAMAKLLEE (178 aa). Residues 45-52, 72-76, 92-95, 159-162, and 193-195 contribute to the GTP site; these read GRSNVGKS, GRTQE, DMPG, TKAD, and TSS. Residues Ser52 and Thr74 each coordinate Mg(2+).

The protein belongs to the TRAFAC class TrmE-Era-EngA-EngB-Septin-like GTPase superfamily. EngB GTPase family. Mg(2+) serves as cofactor.

Functionally, necessary for normal cell division and for the maintenance of normal septation. The chain is Probable GTP-binding protein EngB from Bradyrhizobium diazoefficiens (strain JCM 10833 / BCRC 13528 / IAM 13628 / NBRC 14792 / USDA 110).